A 98-amino-acid chain; its full sequence is NADH-ubiquinone oxidoreductase chain 4L (98 aa).

The next 3 helical transmembrane spans lie at 1-21 (MSMVYANIFLAFIMSLMGLLM), 29-49 (SLLCLEGMMLSLFVMMTVTIL), and 61-81 (IILLVFAACEAALGLSLLVMV).

This sequence belongs to the complex I subunit 4L family. Core subunit of respiratory chain NADH dehydrogenase (Complex I) which is composed of 45 different subunits.

The protein resides in the mitochondrion inner membrane. The enzyme catalyses a ubiquinone + NADH + 5 H(+)(in) = a ubiquinol + NAD(+) + 4 H(+)(out). In terms of biological role, core subunit of the mitochondrial membrane respiratory chain NADH dehydrogenase (Complex I) which catalyzes electron transfer from NADH through the respiratory chain, using ubiquinone as an electron acceptor. Part of the enzyme membrane arm which is embedded in the lipid bilayer and involved in proton translocation. The chain is NADH-ubiquinone oxidoreductase chain 4L (MT-ND4L) from Halichoerus grypus (Gray seal).